The primary structure comprises 118 residues: Ribonuclease P protein component (118 aa).

Belongs to the RnpA family. In terms of assembly, consists of a catalytic RNA component (M1 or rnpB) and a protein subunit.

The enzyme catalyses Endonucleolytic cleavage of RNA, removing 5'-extranucleotides from tRNA precursor.. RNaseP catalyzes the removal of the 5'-leader sequence from pre-tRNA to produce the mature 5'-terminus. It can also cleave other RNA substrates such as 4.5S RNA. The protein component plays an auxiliary but essential role in vivo by binding to the 5'-leader sequence and broadening the substrate specificity of the ribozyme. The sequence is that of Ribonuclease P protein component from Shewanella amazonensis (strain ATCC BAA-1098 / SB2B).